Consider the following 62-residue polypeptide: DNA-directed RNA polymerase subunit Rpo10 (62 aa).

Residues Cys6, Cys9, Cys43, and Cys44 each coordinate Zn(2+).

It belongs to the archaeal Rpo10/eukaryotic RPB10 RNA polymerase subunit family. Part of the RNA polymerase complex. Zn(2+) is required as a cofactor.

The protein localises to the cytoplasm. It catalyses the reaction RNA(n) + a ribonucleoside 5'-triphosphate = RNA(n+1) + diphosphate. DNA-dependent RNA polymerase (RNAP) catalyzes the transcription of DNA into RNA using the four ribonucleoside triphosphates as substrates. The polypeptide is DNA-directed RNA polymerase subunit Rpo10 (Methanosphaerula palustris (strain ATCC BAA-1556 / DSM 19958 / E1-9c)).